A 284-amino-acid polypeptide reads, in one-letter code: MLIIETPPTLRQTVKQWSQEHKRIALIPTMGNLHEGHMALIDAGRARADKVVVSVFVNPMQFDRPEDLAAYPRTLQEDCEQLTRRGVDMVFAPATGVIYPDDLASQTFVDVPRFANILEGESRPGHFRGVATIVSKLFNLVQPDVACFGEKDFQQLAFIRQLVRDMSYDIEIIGVPTVRAADGLALSSRNGYLSAEERRLAPQLNQVLMRLVAQLREGERHIDGLLTSATEQLLQAGLRPDTLVIRDAQTLQPLTVDSRRAVVLFTAWLGKARLIDNAQVDLIS.

Position 30–37 (30–37 (MGNLHEGH)) interacts with ATP. Histidine 37 acts as the Proton donor in catalysis. Position 61 (glutamine 61) interacts with (R)-pantoate. A beta-alanine-binding site is contributed by glutamine 61. Position 149 to 152 (149 to 152 (GEKD)) interacts with ATP. Glutamine 155 is a (R)-pantoate binding site. ATP-binding positions include valine 178 and 186 to 189 (LSSR).

The protein belongs to the pantothenate synthetase family. In terms of assembly, homodimer.

It is found in the cytoplasm. The catalysed reaction is (R)-pantoate + beta-alanine + ATP = (R)-pantothenate + AMP + diphosphate + H(+). It functions in the pathway cofactor biosynthesis; (R)-pantothenate biosynthesis; (R)-pantothenate from (R)-pantoate and beta-alanine: step 1/1. Its function is as follows. Catalyzes the condensation of pantoate with beta-alanine in an ATP-dependent reaction via a pantoyl-adenylate intermediate. In Sodalis glossinidius (strain morsitans), this protein is Pantothenate synthetase.